We begin with the raw amino-acid sequence, 323 residues long: Fructose-1,6-bisphosphatase class 1 (323 aa).

4 residues coordinate Mg(2+): Glu84, Asp103, Leu105, and Asp106. Residues 106-109 (DGSS), Asn198, and Lys264 contribute to the substrate site. Glu270 lines the Mg(2+) pocket.

The protein belongs to the FBPase class 1 family. In terms of assembly, homotetramer. Mg(2+) serves as cofactor.

It localises to the cytoplasm. The enzyme catalyses beta-D-fructose 1,6-bisphosphate + H2O = beta-D-fructose 6-phosphate + phosphate. Its pathway is carbohydrate biosynthesis; gluconeogenesis. The chain is Fructose-1,6-bisphosphatase class 1 from Cellvibrio japonicus (strain Ueda107) (Pseudomonas fluorescens subsp. cellulosa).